Here is a 190-residue protein sequence, read N- to C-terminus: Peptidyl-tRNA hydrolase (190 aa).

Tyr-18 contributes to the tRNA binding site. His-23 serves as the catalytic Proton acceptor. 3 residues coordinate tRNA: Tyr-69, Asn-71, and Asn-117.

Belongs to the PTH family. In terms of assembly, monomer.

The protein resides in the cytoplasm. It catalyses the reaction an N-acyl-L-alpha-aminoacyl-tRNA + H2O = an N-acyl-L-amino acid + a tRNA + H(+). Functionally, hydrolyzes ribosome-free peptidyl-tRNAs (with 1 or more amino acids incorporated), which drop off the ribosome during protein synthesis, or as a result of ribosome stalling. In terms of biological role, catalyzes the release of premature peptidyl moieties from peptidyl-tRNA molecules trapped in stalled 50S ribosomal subunits, and thus maintains levels of free tRNAs and 50S ribosomes. The polypeptide is Peptidyl-tRNA hydrolase (Rhodococcus erythropolis (strain PR4 / NBRC 100887)).